Consider the following 316-residue polypeptide: Putative phosphoribosylaminoimidazole-succinocarboxamide synthase 2 (316 aa).

Belongs to the SAICAR synthetase family.

It carries out the reaction 5-amino-1-(5-phospho-D-ribosyl)imidazole-4-carboxylate + L-aspartate + ATP = (2S)-2-[5-amino-1-(5-phospho-beta-D-ribosyl)imidazole-4-carboxamido]succinate + ADP + phosphate + 2 H(+). It participates in purine metabolism; IMP biosynthesis via de novo pathway; 5-amino-1-(5-phospho-D-ribosyl)imidazole-4-carboxamide from 5-amino-1-(5-phospho-D-ribosyl)imidazole-4-carboxylate: step 1/2. The protein is Putative phosphoribosylaminoimidazole-succinocarboxamide synthase 2 (purC2) of Agrobacterium fabrum (strain C58 / ATCC 33970) (Agrobacterium tumefaciens (strain C58)).